The primary structure comprises 204 residues: Large ribosomal subunit protein bL25 (204 aa).

The protein belongs to the bacterial ribosomal protein bL25 family. CTC subfamily. Part of the 50S ribosomal subunit; part of the 5S rRNA/L5/L18/L25 subcomplex. Contacts the 5S rRNA. Binds to the 5S rRNA independently of L5 and L18.

Its function is as follows. This is one of the proteins that binds to the 5S RNA in the ribosome where it forms part of the central protuberance. The chain is Large ribosomal subunit protein bL25 from Pseudomonas syringae pv. syringae (strain B728a).